Reading from the N-terminus, the 493-residue chain is Galactose-1-phosphate uridylyltransferase 2 (493 aa).

The protein belongs to the galactose-1-phosphate uridylyltransferase type 2 family.

It localises to the cytoplasm. The enzyme catalyses alpha-D-galactose 1-phosphate + UDP-alpha-D-glucose = alpha-D-glucose 1-phosphate + UDP-alpha-D-galactose. The protein operates within carbohydrate metabolism; galactose metabolism. This Streptococcus pneumoniae serotype 4 (strain ATCC BAA-334 / TIGR4) protein is Galactose-1-phosphate uridylyltransferase 2 (galT2).